The following is a 266-amino-acid chain: Glucosamine-6-phosphate deaminase (266 aa).

Aspartate 72 acts as the Proton acceptor; for enolization step in catalysis. Aspartate 141 acts as the For ring-opening step in catalysis. The active-site Proton acceptor; for ring-opening step is the histidine 143. Glutamate 148 serves as the catalytic For ring-opening step.

This sequence belongs to the glucosamine/galactosamine-6-phosphate isomerase family. NagB subfamily. Homohexamer.

It carries out the reaction alpha-D-glucosamine 6-phosphate + H2O = beta-D-fructose 6-phosphate + NH4(+). It participates in amino-sugar metabolism; N-acetylneuraminate degradation; D-fructose 6-phosphate from N-acetylneuraminate: step 5/5. Its activity is regulated as follows. Allosterically activated by N-acetylglucosamine 6-phosphate (GlcNAc6P). Functionally, catalyzes the reversible isomerization-deamination of glucosamine 6-phosphate (GlcN6P) to form fructose 6-phosphate (Fru6P) and ammonium ion. This is Glucosamine-6-phosphate deaminase from Erwinia tasmaniensis (strain DSM 17950 / CFBP 7177 / CIP 109463 / NCPPB 4357 / Et1/99).